The primary structure comprises 312 residues: tRNA uridine(34) hydroxylase (312 aa).

In terms of domain architecture, Rhodanese spans 123–217 (SDPEVLLIDT…YLEEVPQEQS (95 aa)). Catalysis depends on cysteine 177, which acts as the Cysteine persulfide intermediate. The segment covering 282–293 (ARERQKQIELAR) has biased composition (basic and acidic residues). Residues 282–312 (ARERQKQIELARQRNQPHPLGRDPRQSTLEN) form a disordered region.

It belongs to the TrhO family.

The enzyme catalyses uridine(34) in tRNA + AH2 + O2 = 5-hydroxyuridine(34) in tRNA + A + H2O. Catalyzes oxygen-dependent 5-hydroxyuridine (ho5U) modification at position 34 in tRNAs. In Pseudomonas aeruginosa (strain UCBPP-PA14), this protein is tRNA uridine(34) hydroxylase.